The primary structure comprises 977 residues: MELRAVGFCLALLWGCALAAAAAQGKEVVLLDFAAMKGELGWLTHPYGKGWDLMQNIMDDMPIYMYSVCNVVSGDQDNWLRTNWVYREEAERIFIELKFTVRDCNSFPGGASSCKETFNLYYAESDVDYGTNFQKRQFTKIDTIAPDEITVSSDFEARNVKLNVEERMVGPLTRKGFYLAFQDIGACVALLSVRVYYKKCPEMLQSLARFPETIAVAVSDTQPLATVAGTCVDHAVVPYGGEGPLMHCTVDGEWLVPIGQCLCQEGYEKVEDACRACSPGFFKSEASESPCLECPEHTLPSTEGATSCQCEEGYFRAPEDPLSMSCTRPPSAPNYLTAIGMGAKVELRWTAPKDTGGRQDIVYSVTCEQCWPESGECGPCEASVRYSEPPHALTRTSVTVSDLEPHMNYTFAVEARNGVSGLVTSRSFRTASVSINQTEPPKVRLEDRSTTSLSVTWSIPVSQQSRVWKYEVTYRKKGDANSYNVRRTEGFSVTLDDLAPDTTYLVQVQALTQEGQGAGSKVHEFQTLSTEGSANMAVIGGVAVGVVLLLVLAGVGLFIHRRRRNLRARQSSEDVRFSKSEQLKPLKTYVDPHTYEDPNQAVLKFTTEIHPSCVARQKVIGAGEFGEVYKGTLKASSGKKEIPVAIKTLKAGYTEKQRVDFLSEASIMGQFSHHNIIRLEGVVSKYKPMMIITEYMENGALDKFLREKDGEFSVLQLVGMLRGIASGMKYLANMNYVHRDLAARNILVNSNLVCKVSDFGLSRVLEDDPEATYTTSGGKIPIRWTAPEAISYRKFTSASDVWSYGIVMWEVMTYGERPYWELSNHEVMKAINDGFRLPTPMDCPSAIYQLMMQCWQQERSRRPKFADIVSILDKLIRAPDSLKTLADFDPRVSIRLPSTSGSEGVPFRTVSEWLESIKMQQYTEHFMVAGYTAIEKVVQMSNEDIKRIGVRLPGHQKRIAYSLLGLKDQVNTVGIPI.

The first 25 residues, 1–25 (MELRAVGFCLALLWGCALAAAAAQG), serve as a signal peptide directing secretion. Positions 1-205 (MELRAVGFCL…YYKKCPEMLQ (205 aa)) are mediates interaction with CLDN4. Residues 26-538 (KEVVLLDFAA…STEGSANMAV (513 aa)) lie on the Extracellular side of the membrane. Residues 27–205 (EVVLLDFAAM…YYKKCPEMLQ (179 aa)) enclose the Eph LBD domain. Intrachain disulfides connect C69–C187 and C104–C114. Residues 329 to 433 (PPSAPNYLTA…TSRSFRTASV (105 aa)) form the Fibronectin type-III 1 domain. Residues N408 and N436 are each glycosylated (N-linked (GlcNAc...) asparagine). The 92-residue stretch at 439–530 (EPPKVRLEDR…KVHEFQTLST (92 aa)) folds into the Fibronectin type-III 2 domain. Residues 539–559 (IGGVAVGVVLLLVLAGVGLFI) form a helical membrane-spanning segment. At 560–977 (HRRRRNLRAR…DQVNTVGIPI (418 aa)) the chain is on the cytoplasmic side. A phosphoserine mark is found at S571 and S580. A phosphotyrosine; by autocatalysis mark is found at Y589 and Y595. The mediates interaction with ARHGEF16 stretch occupies residues 607-907 (TEIHPSCVAR…STSGSEGVPF (301 aa)). Residues 614 to 876 (VARQKVIGAG…DIVSILDKLI (263 aa)) enclose the Protein kinase domain. Position 620–628 (620–628 (IGAGEFGEV)) interacts with ATP. Y629 is subject to Phosphotyrosine. K647 contacts ATP. T648 carries the phosphothreonine modification. Position 736 is a phosphotyrosine; by autocatalysis (Y736). The Proton acceptor role is filled by D740. Phosphotyrosine; by autocatalysis is present on Y773. Phosphoserine occurs at positions 870, 893, 898, and 902. Positions 887–977 (DFDPRVSIRL…DQVNTVGIPI (91 aa)) are negatively regulates interaction with ARHGEF16. An SAM domain is found at 905 to 969 (VPFRTVSEWL…AYSLLGLKDQ (65 aa)). A Phosphotyrosine; by autocatalysis modification is found at Y922. Phosphotyrosine is present on Y931. The PDZ-binding signature appears at 975 to 977 (IPI).

This sequence belongs to the protein kinase superfamily. Tyr protein kinase family. Ephrin receptor subfamily. As to quaternary structure, homodimer. Interacts with INPPL1; regulates activated EPHA2 endocytosis and degradation. Interacts (inactivated form) with PTK2/FAK1 and interacts (EFNA1 ligand-activated form) with PTPN11; regulates integrin-mediated adhesion. Interacts with ARHGEF16, DOCK4 and ELMO2; mediates ligand-independent activation of RAC1 which stimulates cell migration. Interacts with CLDN4; phosphorylates CLDN4 and may regulate tight junctions. Interacts with ACP1. Interacts with CEMIP. Interacts with NCK1; may regulate EPHA2 activity in cell migration and adhesion. Interacts with SLA. Interacts (phosphorylated form) with VAV2, VAV3 and PI3-kinase p85 subunit (PIK3R1, PIK3R2 or PIK3R3); critical for the EFNA1-induced activation of RAC1 which stimulates cell migration. Interacts with ANKS1A. Interacts with TIMD4. Autophosphorylates. Phosphorylated at Ser-898 by PKB; serum-induced phosphorylation which targets EPHA2 to the cell leading edge and stimulates cell migration. Phosphorylation by PKB is inhibited by EFNA1-activated EPHA2 which regulates PKB activity via a reciprocal regulatory loop. Phosphorylated on tyrosine upon binding and activation by EFNA1. Phosphorylated residues Tyr-589 and Tyr-595 are required for binding VAV2 and VAV3 while phosphorylated residues Tyr-736 and Tyr-931 are required for binding PI3-kinase p85 subunit (PIK3R1, PIK3R2 or PIK3R3). These phosphorylated residues are critical for recruitment of VAV2 and VAV3 and PI3-kinase p85 subunit which transduce downstream signaling to activate RAC1 GTPase and cell migration. Dephosphorylation of Tyr-931 by PTPRF prevents the interaction of EPHA2 with NCK1. Phosphorylated at Ser-898 in response to TNF by RPS6KA1 and RPS6KA3; RPS6KA-EPHA2 signaling pathway controls cell migration. Phosphorylated at Ser-898 by PKA; blocks cell retraction induced by EPHA2 kinase activity. Dephosphorylated by ACP1. In terms of processing, ubiquitinated by CHIP/STUB1. Ubiquitination is regulated by the HSP90 chaperone and regulates the receptor stability and activity through proteasomal degradation. ANKS1A prevents ubiquitination and degradation. Expressed in the lung, intestine and liver. Expressed in myogenic progenitor cells.

The protein localises to the cell membrane. The protein resides in the cell projection. It is found in the ruffle membrane. Its subcellular location is the lamellipodium membrane. It localises to the cell junction. The protein localises to the focal adhesion. The enzyme catalyses L-tyrosyl-[protein] + ATP = O-phospho-L-tyrosyl-[protein] + ADP + H(+). Its function is as follows. Receptor tyrosine kinase which binds promiscuously membrane-bound ephrin-A family ligands residing on adjacent cells, leading to contact-dependent bidirectional signaling into neighboring cells. The signaling pathway downstream of the receptor is referred to as forward signaling while the signaling pathway downstream of the ephrin ligand is referred to as reverse signaling. Activated by the ligand ephrin-A1/EFNA1 regulates migration, integrin-mediated adhesion, proliferation and differentiation of cells. Regulates cell adhesion and differentiation through DSG1/desmoglein-1 and inhibition of the ERK1/ERK2 signaling pathway. May also participate in UV radiation-induced apoptosis and have a ligand-independent stimulatory effect on chemotactic cell migration. During development, may function in distinctive aspects of pattern formation and subsequently in development of several fetal tissues. Involved for instance in angiogenesis, in early hindbrain development and epithelial proliferation and branching morphogenesis during mammary gland development. Engaged by the ligand ephrin-A5/EFNA5 may regulate lens fiber cells shape and interactions and be important for lens transparency development and maintenance. With ephrin-A2/EFNA2 may play a role in bone remodeling through regulation of osteoclastogenesis and osteoblastogenesis. The polypeptide is Ephrin type-A receptor 2 (Epha2) (Mus musculus (Mouse)).